A 139-amino-acid polypeptide reads, in one-letter code: ATP synthase epsilon chain (139 aa).

Belongs to the ATPase epsilon chain family. As to quaternary structure, F-type ATPases have 2 components, CF(1) - the catalytic core - and CF(0) - the membrane proton channel. CF(1) has five subunits: alpha(3), beta(3), gamma(1), delta(1), epsilon(1). CF(0) has three main subunits: a, b and c.

The protein localises to the cell inner membrane. Produces ATP from ADP in the presence of a proton gradient across the membrane. This is ATP synthase epsilon chain from Acinetobacter baylyi (strain ATCC 33305 / BD413 / ADP1).